The primary structure comprises 404 residues: RNA exonuclease 3 (404 aa).

The Exonuclease domain occupies 243–389 (VLSLDCEMAF…QDAIATMDVV (147 aa)).

Belongs to the REXO1/REXO3 family.

The protein resides in the cytoplasm. The protein localises to the nucleus. 3' to 5' exoribonuclease required for proper 3' end maturation of MRP RNA and of the U5L snRNA. This is RNA exonuclease 3 (REX3) from Saccharomyces cerevisiae (strain ATCC 204508 / S288c) (Baker's yeast).